A 183-amino-acid polypeptide reads, in one-letter code: Hypoxanthine-guanine phosphoribosyltransferase (183 aa).

2 residues coordinate diphosphate: arginine 47 and glycine 48. Residues glutamate 103 and aspartate 104 each contribute to the Mg(2+) site. The Proton acceptor role is filled by aspartate 107. GMP-binding positions include lysine 134, 155–156, and aspartate 162; that span reads FV. Residue arginine 168 coordinates diphosphate.

It belongs to the purine/pyrimidine phosphoribosyltransferase family. The cofactor is Mg(2+).

The protein resides in the cytoplasm. It catalyses the reaction IMP + diphosphate = hypoxanthine + 5-phospho-alpha-D-ribose 1-diphosphate. It carries out the reaction GMP + diphosphate = guanine + 5-phospho-alpha-D-ribose 1-diphosphate. It functions in the pathway purine metabolism; IMP biosynthesis via salvage pathway; IMP from hypoxanthine: step 1/1. The protein operates within purine metabolism; GMP biosynthesis via salvage pathway; GMP from guanine: step 1/1. Its function is as follows. Purine salvage pathway enzyme that catalyzes the transfer of the ribosyl-5-phosphate group from 5-phospho-alpha-D-ribose 1-diphosphate (PRPP) to the N9 position of the 6-oxopurines hypoxanthine and guanine to form the corresponding ribonucleotides IMP (inosine 5'-monophosphate) and GMP (guanosine 5'-monophosphate), with the release of PPi. This Lactococcus lactis subsp. lactis (strain IL1403) (Streptococcus lactis) protein is Hypoxanthine-guanine phosphoribosyltransferase (hpt).